The chain runs to 407 residues: MKKIALIIGSMIAGGIISAAGFTWFAKEEPPAEKTSTAERKVLFWYDPMYPNTRFDKPGKSPFMDMDLVPKYADEESSASGVRIDPTQTQNLGVKTATVTRGPLTFSQSFPANVSYNEYQYAIVQARAAGFIDKVYPLTVGDKVQKGAPLLDLTIPDWVEAQSEYLLLRETGGTATQTEGILERLRLAGMPEADIRRLIATQKIQTRFTLKAPIDGVITAFDLRAGMNIAKDNVVAKIQGMDPVWVTAAIPESIAWLVKDASQFTLTVPARPDKTLTIRKWTLLPGVDAATRTLQLRLEVDNADEALKPGMNAWLQLNTASEPMLLIPSQALIDTGNEQRVITVDADGRFVPKRVAVFQASQGVTALRSGLAEGEKVVSSGLFLIDSEANISGALERMRSESATHAH.

An N-terminal signal peptide occupies residues 1-26 (MKKIALIIGSMIAGGIISAAGFTWFA).

It belongs to the membrane fusion protein (MFP) (TC 8.A.1) family. As to quaternary structure, the cus efflux system is composed of CusA, CusB, CusC and CusF.

Its function is as follows. Part of a cation efflux system that mediates resistance to copper and silver. The sequence is that of Cation efflux system protein CusB (cusB) from Escherichia coli O6:H1 (strain CFT073 / ATCC 700928 / UPEC).